Reading from the N-terminus, the 46-residue chain is Small polypeptide DEVIL 5 (46 aa).

A helical membrane pass occupies residues 8–24; sequence VGGTKRKMWSRGVGGVV. A required for DVL/RTFL small polypeptide activity region spans residues 15–46; sequence MWSRGVGGVVREQKAKLYIIRRCVVMLLCWHD.

Belongs to the DVL/RTFL small polypeptides family. Mostly expressed in roots and flowers, and, to a lower extent, in leaves and stems.

It is found in the cell membrane. In terms of biological role, small polypeptide acting as a regulatory molecule which coordinates cellular responses required for differentiation, growth and development, including leaves shape, pedicule elongation, inflorescence organization and fruit maturation, probably by restricting polar cell proliferation in lateral organs and coordinating socket cell recruitment and differentiation at trichome sites. The protein is Small polypeptide DEVIL 5 of Arabidopsis thaliana (Mouse-ear cress).